A 594-amino-acid chain; its full sequence is Potassium-transporting ATPase potassium-binding subunit (594 aa).

The next 12 helical transmembrane spans lie at glutamine 4–glycine 24, glutamine 65–glutamine 85, alanine 136–isoleucine 156, leucine 179–isoleucine 199, leucine 287–valine 307, valine 314–alanine 334, phenylalanine 361–valine 381, alanine 390–valine 410, glycine 413–glycine 433, methionine 450–valine 470, leucine 518–alanine 538, and leucine 560–alanine 580.

It belongs to the KdpA family. In terms of assembly, the system is composed of three essential subunits: KdpA, KdpB and KdpC.

It localises to the cell inner membrane. Part of the high-affinity ATP-driven potassium transport (or Kdp) system, which catalyzes the hydrolysis of ATP coupled with the electrogenic transport of potassium into the cytoplasm. This subunit binds the periplasmic potassium ions and delivers the ions to the membrane domain of KdpB through an intramembrane tunnel. This chain is Potassium-transporting ATPase potassium-binding subunit, found in Bordetella avium (strain 197N).